We begin with the raw amino-acid sequence, 217 residues long: MSSDFEGYEQDFAVLTAEITSKIARVPRLPPDEKKQMVANVEKQLEEARELLEQMDLEVREIPPQSRGMYSNRMRSYKQEMGKLETDFKRSRIAYSDEVRNELLGDAGNSSENQRAHLLDNTERLERSSRRLEAGYQIAVETEQIGQEMLENLSHDREKIQRARDRLRDADANLGKSSRILTGMLRRIIQNRILLVILGIIVVIAILTAIAFFVKGH.

Topologically, residues 1–192 (MSSDFEGYEQ…GMLRRIIQNR (192 aa)) are cytoplasmic. Coiled-coil stretches lie at residues 31–92 (PDEK…KRSR) and 112–178 (ENQR…GKSS). A helical; Anchor for type IV membrane protein transmembrane segment spans residues 193-213 (ILLVILGIIVVIAILTAIAFF). Residues 214–217 (VKGH) are Vesicular-facing.

The protein belongs to the VTI1 family. Interacts with distinct SNARE complexes that contain either STX5 or STX6. Interacts with NAPA and, to a lesser extent, with NAPG. Identified in a complex containing STX6, STX12, VAMP4 and VTI1A. As to expression, widely expressed.

It is found in the golgi apparatus membrane. V-SNARE that mediates vesicle transport pathways through interactions with t-SNAREs on the target membrane. These interactions are proposed to mediate aspects of the specificity of vesicle trafficking and to promote fusion of the lipid bilayers. Involved in vesicular transport from the late endosomes to the trans-Golgi network. Along with VAMP7, involved in an non-conventional RAB1-dependent traffic route to the cell surface used by KCNIP1 and KCND2. May be concerned with increased secretion of cytokines associated with cellular senescence. The protein is Vesicle transport through interaction with t-SNAREs homolog 1A (Vti1a) of Mus musculus (Mouse).